The following is a 93-amino-acid chain: Phosphocarrier protein HPr (93 aa).

Positions 2-89 (AERRVNVGWA…KLVAEGLEEL (88 aa)) constitute an HPr domain. His15 (pros-phosphohistidine intermediate) is an active-site residue.

This sequence belongs to the HPr family.

The protein localises to the cytoplasm. General (non sugar-specific) component of the phosphoenolpyruvate-dependent sugar phosphotransferase system (sugar PTS). This major carbohydrate active-transport system catalyzes the phosphorylation of incoming sugar substrates concomitantly with their translocation across the cell membrane. The phosphoryl group from phosphoenolpyruvate (PEP) is transferred to the phosphoryl carrier protein HPr by enzyme I. Phospho-HPr then transfers it to the PTS EIIA domain. The protein is Phosphocarrier protein HPr (ptsH) of Streptomyces coelicolor (strain ATCC BAA-471 / A3(2) / M145).